The sequence spans 264 residues: 3-methyl-2-oxobutanoate hydroxymethyltransferase (264 aa).

Mg(2+)-binding residues include Asp45 and Asp84. 3-methyl-2-oxobutanoate-binding positions include 45 to 46 (DS), Asp84, and Lys112. Glu114 serves as a coordination point for Mg(2+). The active-site Proton acceptor is Glu181.

Belongs to the PanB family. Homodecamer; pentamer of dimers. Mg(2+) serves as cofactor.

The protein localises to the cytoplasm. It carries out the reaction 3-methyl-2-oxobutanoate + (6R)-5,10-methylene-5,6,7,8-tetrahydrofolate + H2O = 2-dehydropantoate + (6S)-5,6,7,8-tetrahydrofolate. It functions in the pathway cofactor biosynthesis; (R)-pantothenate biosynthesis; (R)-pantoate from 3-methyl-2-oxobutanoate: step 1/2. Catalyzes the reversible reaction in which hydroxymethyl group from 5,10-methylenetetrahydrofolate is transferred onto alpha-ketoisovalerate to form ketopantoate. This Tolumonas auensis (strain DSM 9187 / NBRC 110442 / TA 4) protein is 3-methyl-2-oxobutanoate hydroxymethyltransferase.